We begin with the raw amino-acid sequence, 357 residues long: SPbeta prophage-derived pesticidal crystal protein-like YokG (357 aa).

Belongs to the cry6A endotoxin family.

The protein is SPbeta prophage-derived pesticidal crystal protein-like YokG (yokG) of Bacillus subtilis (strain 168).